Reading from the N-terminus, the 327-residue chain is Vacuolar protein sorting-associated protein 26A (327 aa).

Residues 306–327 (RTNFHQRFESPESQASAEQPEM) are disordered. Residue Ser315 is modified to Phosphoserine. Polar residues predominate over residues 316–327 (PESQASAEQPEM).

It belongs to the VPS26 family. In terms of assembly, component of the heterotrimeric retromer cargo-selective complex (CSC), also described as vacuolar protein sorting subcomplex (VPS), formed by VPS26 (VPS26A or VPS26B), VPS29 and VPS35. The CSC has a highly elongated structure with VPS26 and VPS29 binding independently at opposite distal ends of VPS35 as central platform. The CSC is believed to associate with variable sorting nexins to form functionally distinct retromer complex variants. The originally described retromer complex (also called SNX-BAR retromer) is a pentamer containing the CSC and a heterodimeric membrane-deforming subcomplex formed between SNX1 or SNX2 and SNX5 or SNX6 (also called SNX-BAR subcomplex); the respective CSC and SNX-BAR subcomplexes associate with low affinity. The CSC associates with SNX3 to form a SNX3-retromer complex. The CSC associates with SNX27, the WASH complex and the SNX-BAR subcomplex to form the SNX27-retromer complex. Interacts with VPS29, VPS35, SNX27, SNX1, SNX2, SNX5, SNX6, SNX3, RAB7A, ECPAS, EHD1, WASHC5, SORL1.

Its subcellular location is the cytoplasm. It localises to the endosome membrane. It is found in the early endosome. In terms of biological role, acts as a component of the retromer cargo-selective complex (CSC). The CSC is believed to be the core functional component of retromer or respective retromer complex variants acting to prevent missorting of selected transmembrane cargo proteins into the lysosomal degradation pathway. The recruitment of the CSC to the endosomal membrane involves RAB7A and SNX3. The SNX-BAR retromer mediates retrograde transport of cargo proteins from endosomes to the trans-Golgi network (TGN) and is involved in endosome-to-plasma membrane transport for cargo protein recycling. The SNX3-retromer mediates the retrograde endosome-to-TGN transport of WLS distinct from the SNX-BAR retromer pathway. The SNX27-retromer is believed to be involved in endosome-to-plasma membrane trafficking and recycling of a broad spectrum of cargo proteins. The CSC complex seems to act as recruitment hub for other proteins, such as the WASH complex and TBC1D5. Required for retrograde transport of lysosomal enzyme receptor IGF2R. Required to regulate transcytosis of the polymeric immunoglobulin receptor (pIgR-pIgA). Required for the endosomal localization of WASHC2 (indicative for the WASH complex). Required for the endosomal localization of TBC1D5. Mediates retromer cargo recognition of SORL1 and is involved in trafficking of SORL1 implicated in sorting and processing of APP. Involved in retromer-independent lysosomal sorting of F2R. Involved in recycling of ADRB2. Acts redundantly with VSP26B in SNX-27 mediated endocytic recycling of SLC2A1/GLUT1. Enhances the affinity of SNX27 for PDZ-binding motifs in cargo proteins. This is Vacuolar protein sorting-associated protein 26A (VPS26A) from Bos taurus (Bovine).